The chain runs to 466 residues: MASPLSSSTVVSHRLFFLHPSPLNRKFLFVKPKLPFNRTNSGDFRMRLHSTSSKTGTKELIHSCNSSIDSKLNTFEAGSKNLEKLVATILIFVQVWSPLPLFGLDSAYISPAEAVLYSPDTKVPRTGELALRRAIPANPSMKIIQASLEDISYLLRIPQRKPYGTMESNVKKALKVAIDDKDKILASIPVDLKDKGSELYTTLIDGKGGLQALITSIKKQDPDKVSLGLAASLDTVADLELLQASGLSFLLPQQYLNYPRLAGRGTVEITIEKADGSTFSAEAGGDQRKSATVQIVIDGYSAPLTAGNFAKLVTSGAYDGAKLNTVNQAVITEDGSGKVESVSVPLEVMPSGQFEPLYRTPLSVQDGELPVLPLSVYGAVAMAHSENSEEYSSPYQFFFYLYDKRNSGLGGLSFDEGQFSVFGYTIAGKDILGQIKTGDIIKSAKLIEGQDRLSLPVQNNNINEST.

Residues 1–65 (MASPLSSSTV…GTKELIHSCN (65 aa)) constitute a chloroplast transit peptide. A thylakoid-targeting transit peptide spans 66–114 (SSIDSKLNTFEAGSKNLEKLVATILIFVQVWSPLPLFGLDSAYISPAEA). A PPIase cyclophilin-type domain is found at 278-466 (TFSAEAGGDQ…VQNNNINEST (189 aa)).

As to expression, aerial parts.

It localises to the plastid. The protein localises to the chloroplast thylakoid lumen. The enzyme catalyses [protein]-peptidylproline (omega=180) = [protein]-peptidylproline (omega=0). PPIases accelerate the folding of proteins. It catalyzes the cis-trans isomerization of proline imidic peptide bonds in oligopeptides. In Arabidopsis thaliana (Mouse-ear cress), this protein is Peptidyl-prolyl cis-trans isomerase CYP37, chloroplastic (CYP37).